The following is a 179-amino-acid chain: MHKDLKNVLLSEEDIQNICKEMGAIITEDYKDRPLVCVGILKGSVMFMADLIKRIDTHLSIDFMDVSSYHGGTESTGEVQILKDLGASIENKDVLIIEDILETGTTLKSITELLQSRKVNSLEIATLLDKPNRRKADIEAKYVGKKIPDEFVVGYGLDYRELYRNLPYIGTLKAEVYSK.

Residues Lys-42 and Gly-43 each coordinate diphosphate. Glu-98 and Asp-99 together coordinate Mg(2+). The Proton acceptor role is filled by Glu-102. Residues Lys-130, 151–152, and Asp-158 each bind GMP; that span reads FV. Arg-164 contacts diphosphate.

Belongs to the purine/pyrimidine phosphoribosyltransferase family. Requires Mg(2+) as cofactor.

It localises to the cytoplasm. It catalyses the reaction IMP + diphosphate = hypoxanthine + 5-phospho-alpha-D-ribose 1-diphosphate. It carries out the reaction GMP + diphosphate = guanine + 5-phospho-alpha-D-ribose 1-diphosphate. The protein operates within purine metabolism; IMP biosynthesis via salvage pathway; IMP from hypoxanthine: step 1/1. It functions in the pathway purine metabolism; GMP biosynthesis via salvage pathway; GMP from guanine: step 1/1. Functionally, purine salvage pathway enzyme that catalyzes the transfer of the ribosyl-5-phosphate group from 5-phospho-alpha-D-ribose 1-diphosphate (PRPP) to the N9 position of the 6-oxopurines hypoxanthine and guanine to form the corresponding ribonucleotides IMP (inosine 5'-monophosphate) and GMP (guanosine 5'-monophosphate), with the release of PPi. The polypeptide is Hypoxanthine-guanine phosphoribosyltransferase (hpt) (Staphylococcus epidermidis (strain ATCC 35984 / DSM 28319 / BCRC 17069 / CCUG 31568 / BM 3577 / RP62A)).